The sequence spans 1025 residues: Exportin-T (1025 aa).

It belongs to the exportin family.

It is found in the nucleus. The protein localises to the cytoplasm. Its function is as follows. tRNA nucleus export receptor which facilitates tRNA translocation across the nuclear pore complex. Involved in pre-tRNA splicing, probably by affecting the interaction of pre-tRNA with splicing endonuclease. In Candida albicans (strain SC5314 / ATCC MYA-2876) (Yeast), this protein is Exportin-T (LOS1).